We begin with the raw amino-acid sequence, 232 residues long: Ribose-5-phosphate isomerase A (232 aa).

Residues 34-37 (TGST), 89-92 (DGAD), and 102-105 (KGGG) each bind substrate. Residue glutamate 111 is the Proton acceptor of the active site. Lysine 129 is a binding site for substrate.

Belongs to the ribose 5-phosphate isomerase family. In terms of assembly, homodimer.

The catalysed reaction is aldehydo-D-ribose 5-phosphate = D-ribulose 5-phosphate. It functions in the pathway carbohydrate degradation; pentose phosphate pathway; D-ribose 5-phosphate from D-ribulose 5-phosphate (non-oxidative stage): step 1/1. Its function is as follows. Catalyzes the reversible conversion of ribose-5-phosphate to ribulose 5-phosphate. This chain is Ribose-5-phosphate isomerase A, found in Protochlamydia amoebophila (strain UWE25).